Consider the following 435-residue polypeptide: Glutamyl-tRNA reductase (435 aa).

Residues 49-52 (TCNR), serine 109, 114-116 (ETQ), and glutamine 120 each bind substrate. Cysteine 50 acts as the Nucleophile in catalysis. 189 to 194 (GAGEMS) is a binding site for NADP(+).

This sequence belongs to the glutamyl-tRNA reductase family. Homodimer.

It catalyses the reaction (S)-4-amino-5-oxopentanoate + tRNA(Glu) + NADP(+) = L-glutamyl-tRNA(Glu) + NADPH + H(+). It functions in the pathway porphyrin-containing compound metabolism; protoporphyrin-IX biosynthesis; 5-aminolevulinate from L-glutamyl-tRNA(Glu): step 1/2. In terms of biological role, catalyzes the NADPH-dependent reduction of glutamyl-tRNA(Glu) to glutamate 1-semialdehyde (GSA). The protein is Glutamyl-tRNA reductase of Listeria innocua serovar 6a (strain ATCC BAA-680 / CLIP 11262).